Consider the following 141-residue polypeptide: Large ribosomal subunit protein uL11 (141 aa).

The protein belongs to the universal ribosomal protein uL11 family. In terms of assembly, part of the ribosomal stalk of the 50S ribosomal subunit. Interacts with L10 and the large rRNA to form the base of the stalk. L10 forms an elongated spine to which L12 dimers bind in a sequential fashion forming a multimeric L10(L12)X complex. In terms of processing, one or more lysine residues are methylated.

Forms part of the ribosomal stalk which helps the ribosome interact with GTP-bound translation factors. In Parasynechococcus marenigrum (strain WH8102), this protein is Large ribosomal subunit protein uL11.